A 238-amino-acid chain; its full sequence is Probable transcriptional regulatory protein MGAS2096_Spy0287 (238 aa).

This sequence belongs to the TACO1 family. YeeN subfamily.

The protein localises to the cytoplasm. The protein is Probable transcriptional regulatory protein MGAS2096_Spy0287 of Streptococcus pyogenes serotype M12 (strain MGAS2096).